Reading from the N-terminus, the 203-residue chain is MPSKNGPLRVGIGGPVGSGKTALTDKLCKAMREKYSVAVVTNDIYTKEDAEALVRMQALPSERIVGVETGGCPHTAIREDASINLQAIADLNRRIPDLDVVFIESGGDNLAATFSPDLADLTIYVISVCQGEEIPRKGGPGITKSDLLVINKKDLAPYVGADLEVMEHDATRMRAEKPFVFSDMKRGEGIERIVEFLTVQGGL.

GTP is bound at residue 14 to 21 (GPVGSGKT).

Belongs to the SIMIBI class G3E GTPase family. UreG subfamily. Homodimer. UreD, UreF and UreG form a complex that acts as a GTP-hydrolysis-dependent molecular chaperone, activating the urease apoprotein by helping to assemble the nickel containing metallocenter of UreC. The UreE protein probably delivers the nickel.

Its subcellular location is the cytoplasm. Functionally, facilitates the functional incorporation of the urease nickel metallocenter. This process requires GTP hydrolysis, probably effectuated by UreG. This is Urease accessory protein UreG from Sinorhizobium fredii (strain NBRC 101917 / NGR234).